Here is a 180-residue protein sequence, read N- to C-terminus: uncharacterized protein (180 aa).

Residues 114–147 (EDIYEDIVDVRLENQSLEEQLEDFKECSRALKKY) are a coiled coil.

The protein belongs to the mimivirus L74/L77/R857 family.

This is an uncharacterized protein from Acanthamoeba polyphaga mimivirus (APMV).